We begin with the raw amino-acid sequence, 397 residues long: Probable inactive purple acid phosphatase 28 (397 aa).

A signal peptide spans M1–S30. Residues N91 and N209 are each glycosylated (N-linked (GlcNAc...) asparagine). Zn(2+) is bound by residues H266 and H314. H314 to H316 is a binding site for substrate. Position 316 (H316) interacts with Fe cation.

Belongs to the metallophosphoesterase superfamily. Purple acid phosphatase family. As to quaternary structure, homodimer. Fe cation serves as cofactor. Requires Zn(2+) as cofactor. Expressed in roots, stems, leaves, flowers and siliques.

The protein localises to the secreted. The chain is Probable inactive purple acid phosphatase 28 (PAP28) from Arabidopsis thaliana (Mouse-ear cress).